Here is a 555-residue protein sequence, read N- to C-terminus: Glucose-6-phosphate isomerase (555 aa).

The active-site Proton donor is Glu355. Active-site residues include His386 and Lys514.

The protein belongs to the GPI family.

Its subcellular location is the cytoplasm. The catalysed reaction is alpha-D-glucose 6-phosphate = beta-D-fructose 6-phosphate. It participates in carbohydrate biosynthesis; gluconeogenesis. The protein operates within carbohydrate degradation; glycolysis; D-glyceraldehyde 3-phosphate and glycerone phosphate from D-glucose: step 2/4. Its function is as follows. Catalyzes the reversible isomerization of glucose-6-phosphate to fructose-6-phosphate. This chain is Glucose-6-phosphate isomerase, found in Buchnera aphidicola subsp. Schizaphis graminum (strain Sg).